We begin with the raw amino-acid sequence, 261 residues long: Cytochrome c oxidase subunit 3 (261 aa).

At 1–15 (MTHQTHAYHMVNPSP) the chain is on the mitochondrial matrix side. The chain crosses the membrane as a helical span at residues 16-34 (WPLTGALSALLMTSGLIMW). The Mitochondrial intermembrane portion of the chain corresponds to 35–40 (FHFNST). A helical transmembrane segment spans residues 41-66 (ILLMLGLTTNMLTMYQWWRDVIREST). The Mitochondrial matrix portion of the chain corresponds to 67–72 (FQGHHT). The chain crosses the membrane as a helical span at residues 73-105 (PNVQKGLRYGMILFIISEVLFFTGFFWAFYHSS). Over 106-128 (LAPTPELGGCWPPTGIHPLNPLE) the chain is Mitochondrial intermembrane. The chain crosses the membrane as a helical span at residues 129–152 (VPLLNTSVLLASGVSITWAHHSLM). Over 153–155 (EGN) the chain is Mitochondrial matrix. Residues 156-183 (RNHMLQALFITIALGVYFTLLQASEYYE) traverse the membrane as a helical segment. The Mitochondrial intermembrane segment spans residues 184–190 (APFTISD). Residues 191–223 (GVYGSTFFVATGFHGLHVIIGSTFLIVCFFRQL) form a helical membrane-spanning segment. Residues 224 to 232 (KFHFTSNHH) lie on the Mitochondrial matrix side of the membrane. Residues 233-256 (FGFEAAAWYWHFVDVVWLFLYVSI) traverse the membrane as a helical segment. At 257-261 (YWWGS) the chain is on the mitochondrial intermembrane side.

Belongs to the cytochrome c oxidase subunit 3 family. Component of the cytochrome c oxidase (complex IV, CIV), a multisubunit enzyme composed of 14 subunits. The complex is composed of a catalytic core of 3 subunits MT-CO1, MT-CO2 and MT-CO3, encoded in the mitochondrial DNA, and 11 supernumerary subunits COX4I, COX5A, COX5B, COX6A, COX6B, COX6C, COX7A, COX7B, COX7C, COX8 and NDUFA4, which are encoded in the nuclear genome. The complex exists as a monomer or a dimer and forms supercomplexes (SCs) in the inner mitochondrial membrane with NADH-ubiquinone oxidoreductase (complex I, CI) and ubiquinol-cytochrome c oxidoreductase (cytochrome b-c1 complex, complex III, CIII), resulting in different assemblies (supercomplex SCI(1)III(2)IV(1) and megacomplex MCI(2)III(2)IV(2)).

The protein resides in the mitochondrion inner membrane. It catalyses the reaction 4 Fe(II)-[cytochrome c] + O2 + 8 H(+)(in) = 4 Fe(III)-[cytochrome c] + 2 H2O + 4 H(+)(out). In terms of biological role, component of the cytochrome c oxidase, the last enzyme in the mitochondrial electron transport chain which drives oxidative phosphorylation. The respiratory chain contains 3 multisubunit complexes succinate dehydrogenase (complex II, CII), ubiquinol-cytochrome c oxidoreductase (cytochrome b-c1 complex, complex III, CIII) and cytochrome c oxidase (complex IV, CIV), that cooperate to transfer electrons derived from NADH and succinate to molecular oxygen, creating an electrochemical gradient over the inner membrane that drives transmembrane transport and the ATP synthase. Cytochrome c oxidase is the component of the respiratory chain that catalyzes the reduction of oxygen to water. Electrons originating from reduced cytochrome c in the intermembrane space (IMS) are transferred via the dinuclear copper A center (CU(A)) of subunit 2 and heme A of subunit 1 to the active site in subunit 1, a binuclear center (BNC) formed by heme A3 and copper B (CU(B)). The BNC reduces molecular oxygen to 2 water molecules using 4 electrons from cytochrome c in the IMS and 4 protons from the mitochondrial matrix. The chain is Cytochrome c oxidase subunit 3 (MT-CO3) from Eudorcas thomsonii (Thomson's gazelle).